Reading from the N-terminus, the 416-residue chain is Probable endo-beta-1,4-glucanase celB (416 aa).

Positions 1 to 17 (MIWTLAPFVALLPLVTA) are cleaved as a signal peptide. Residues asparagine 45, asparagine 104, asparagine 117, and asparagine 135 are each glycosylated (N-linked (GlcNAc...) asparagine). Catalysis depends on glutamate 214, which acts as the Nucleophile. Glutamate 219 acts as the Proton donor in catalysis. Asparagine 233, asparagine 278, asparagine 292, and asparagine 382 each carry an N-linked (GlcNAc...) asparagine glycan.

Belongs to the glycosyl hydrolase 7 (cellulase C) family.

Its subcellular location is the secreted. It catalyses the reaction Endohydrolysis of (1-&gt;4)-beta-D-glucosidic linkages in cellulose, lichenin and cereal beta-D-glucans.. Functionally, has endoglucanase activity on substrates containing beta-1,4 glycosidic bonds, like in carboxymethylcellulose (CMC), hydroxyethylcellulose (HEC) and beta-glucan. Involved in the degradation of complex natural cellulosic substrates. In Aspergillus flavus (strain ATCC 200026 / FGSC A1120 / IAM 13836 / NRRL 3357 / JCM 12722 / SRRC 167), this protein is Probable endo-beta-1,4-glucanase celB (celB).